Reading from the N-terminus, the 270-residue chain is MNETTPIAPAKVLPDAQTVTSVRHWTDTLFSFRVTRPQTLRFRSGEFVMIGLLDDNGKPIMRAYSIASPAWDEELEFYSIKVPDGPLTSRLQHIKVGEQIILRPKPVGTLVIDALLPGKRLWFLATGTGIAPFASLMREPEAYEKFDEVIMMHACRTVAELEYGRQLVEALQEDPLIGELVEGKLKYYPTTTREEFHHMGRITDNLASGKVFEDLGIAPMNPETDRAMVCGSLAFNVDVMKVLESYGLREGANSEPREFVVEKAFVGEGI.

The region spanning 12–113 (VLPDAQTVTS…PKPVGTLVID (102 aa)) is the FAD-binding FR-type domain. Residues 62 to 65 (RAYS), 78 to 80 (YSI), and 86 to 88 (PLT) each bind FAD. Residue Thr126 coordinates NADP(+). Thr128 lines the FAD pocket. Residues Arg156, 192 to 193 (TR), Arg201, and Asp238 each bind NADP(+). 264–270 (AFVGEGI) serves as a coordination point for FAD.

Belongs to the ferredoxin--NADP reductase type 1 family. Monomer. FAD is required as a cofactor.

It is found in the cytoplasm. The catalysed reaction is 2 reduced [2Fe-2S]-[ferredoxin] + NADP(+) + H(+) = 2 oxidized [2Fe-2S]-[ferredoxin] + NADPH. The enzyme catalyses reduced [flavodoxin] + NADP(+) = oxidized [flavodoxin] + NADPH + 2 H(+). Transports electrons between flavodoxin or ferredoxin and NADPH. The polypeptide is Flavodoxin/ferredoxin--NADP reductase (Rhodobacter capsulatus (Rhodopseudomonas capsulata)).